A 137-amino-acid chain; its full sequence is Small ribosomal subunit protein bS6 (137 aa).

Residues 96–137 (ITEASPMAKAKDERDTRRSSEERAPRAEAAEEVEESAENTAE) are disordered. Residues 104–124 (KAKDERDTRRSSEERAPRAEA) show a composition bias toward basic and acidic residues. A compositionally biased stretch (acidic residues) spans 125–137 (AEEVEESAENTAE).

It belongs to the bacterial ribosomal protein bS6 family.

Functionally, binds together with bS18 to 16S ribosomal RNA. The polypeptide is Small ribosomal subunit protein bS6 (Shewanella halifaxensis (strain HAW-EB4)).